We begin with the raw amino-acid sequence, 885 residues long: Disease resistance protein RFL1 (885 aa).

Residues 27–61 are a coiled coil; the sequence is SYIQNLSENLASLQKAMGVLNAKRDDVQGRINREE. Residues 141–443 form the NB-ARC domain; the sequence is EAAPIAEVEE…CEGFIKEKQG (303 aa). An ATP-binding site is contributed by 183 to 190; the sequence is GMGGVGKT. LRR repeat units lie at residues 517–538, 539–561, 564–586, 588–610, 611–633, 634–655, and 657–679; these read AVKRMSLMNNNFEKILGSPECV, ELITLFLQNNYKLVDISMEFFRC, SLAVLDLSENHSLSELPEEISEL, SLQYLDLSGTYIERLPHGLHELR, KLVHLKLERTRRLESISGISYLS, SLRTLRLRDSKTTLDTGLMKEL, and LLEHLELITTDISSGLVGELFCY.

The protein belongs to the disease resistance NB-LRR family.

Its function is as follows. Disease resistance (R) protein. The sequence is that of Disease resistance protein RFL1 (RFL1) from Arabidopsis thaliana (Mouse-ear cress).